A 248-amino-acid polypeptide reads, in one-letter code: 1-(5-phosphoribosyl)-5-[(5-phosphoribosylamino)methylideneamino] imidazole-4-carboxamide isomerase (248 aa).

D8 acts as the Proton acceptor in catalysis. The active-site Proton donor is D129.

This sequence belongs to the HisA/HisF family.

Its subcellular location is the cytoplasm. The catalysed reaction is 1-(5-phospho-beta-D-ribosyl)-5-[(5-phospho-beta-D-ribosylamino)methylideneamino]imidazole-4-carboxamide = 5-[(5-phospho-1-deoxy-D-ribulos-1-ylimino)methylamino]-1-(5-phospho-beta-D-ribosyl)imidazole-4-carboxamide. It functions in the pathway amino-acid biosynthesis; L-histidine biosynthesis; L-histidine from 5-phospho-alpha-D-ribose 1-diphosphate: step 4/9. In Rhizobium etli (strain CIAT 652), this protein is 1-(5-phosphoribosyl)-5-[(5-phosphoribosylamino)methylideneamino] imidazole-4-carboxamide isomerase.